A 1305-amino-acid chain; its full sequence is Cyclin-G-associated kinase (1305 aa).

Position 2 is an N-acetylserine (S2). 2 positions are modified to phosphoserine: S2 and S16. Positions 40–317 constitute a Protein kinase domain; that stretch reads LRVRRVLAEG…EVVRQLQEIA (278 aa). ATP contacts are provided by residues 46-54 and K69; that span reads LAEGGFAFV. D173 serves as the catalytic Proton acceptor. One can recognise a Phosphatase tensin-type domain in the interval 397 to 564; the sequence is SVANYAKGDL…EYVCDMVAEE (168 aa). Phosphoserine is present on S454. A C2 tensin-type domain is found at 570 to 708; the sequence is SKPMLVKSVV…FQVNLEVEVE (139 aa). Disordered regions lie at residues 707–732 and 747–854; these read VEPR…NPKI and FGKP…AAGT. Residue S768 is modified to Phosphoserine. T774 is subject to Phosphothreonine. The span at 776-789 shows a compositional bias: polar residues; the sequence is SDSPQSSSTDTNHF. S781 is subject to Phosphoserine. T792 carries the phosphothreonine modification. Residues 805–816 show a composition bias toward polar residues; that stretch reads LDNTSPKESQSV. S809, S824, and S827 each carry phosphoserine. A compositionally biased stretch (acidic residues) spans 822–832; sequence DGSEVSDEEEA. Positions 836 to 848 are enriched in basic and acidic residues; sequence SEERKPGAGEDTP. Phosphoserine is present on S938. Positions 1037 to 1139 are disordered; the sequence is DTWADTATPG…WTPQAKPAPR (103 aa). Positions 1084-1099 are enriched in low complexity; it reads DLSDLSSSLQGLPAGL. Residues 1111-1132 show a composition bias toward polar residues; it reads TQKSNSPWQANRPTAPGTSWTP. Position 1122 is an omega-N-methylarginine (R1122). The residue at position 1171 (S1171) is a Phosphoserine. One can recognise a J domain in the interval 1241-1305; it reads SRWTPVSMAD…FENQGSRPLF (65 aa).

The protein belongs to the protein kinase superfamily. Ser/Thr protein kinase family.

It localises to the cytoplasm. The protein localises to the perinuclear region. It is found in the golgi apparatus. The protein resides in the trans-Golgi network. Its subcellular location is the cell junction. It localises to the focal adhesion. The protein localises to the cytoplasmic vesicle. It is found in the clathrin-coated vesicle. The enzyme catalyses L-seryl-[protein] + ATP = O-phospho-L-seryl-[protein] + ADP + H(+). It catalyses the reaction L-threonyl-[protein] + ATP = O-phospho-L-threonyl-[protein] + ADP + H(+). Its function is as follows. Associates with cyclin G and CDK5. Seems to act as an auxilin homolog that is involved in the uncoating of clathrin-coated vesicles by Hsc70 in non-neuronal cells. Expression oscillates slightly during the cell cycle, peaking at G1. May play a role in clathrin-mediated endocytosis and intracellular trafficking, and in the dynamics of clathrin assembly/disassembly. This Mus musculus (Mouse) protein is Cyclin-G-associated kinase.